The chain runs to 232 residues: Ribosomal RNA small subunit methyltransferase G (232 aa).

S-adenosyl-L-methionine-binding positions include Gly93, Leu98, 144 to 145 (VE), and Arg163.

Belongs to the methyltransferase superfamily. RNA methyltransferase RsmG family.

The protein resides in the cytoplasm. It catalyses the reaction guanosine(527) in 16S rRNA + S-adenosyl-L-methionine = N(7)-methylguanosine(527) in 16S rRNA + S-adenosyl-L-homocysteine. Its function is as follows. Specifically methylates the N7 position of guanine in position 527 of 16S rRNA. The chain is Ribosomal RNA small subunit methyltransferase G from Burkholderia pseudomallei (strain 1106a).